The chain runs to 304 residues: Protein Largen (304 aa).

Residues 1 to 13 (MSAKSKGNPSSSC) are compositionally biased toward polar residues. 4 disordered regions span residues 1-27 (MSAK…TKVK), 66-91 (QLED…TASS), 114-160 (LTVL…GGLP), and 239-304 (HPPG…TTTV). A coiled-coil region spans residues 33 to 70 (IVEDLELVLGDLKDVAKELKEVVDQIDTLTSDLQLEDE). The span at 77-91 (TDTLNSSSSGTTASS) shows a compositional bias: low complexity. Pro residues-rich tracts occupy residues 120–129 (PNPPPPPPRL), 239–261 (HPPG…PPFP), and 277–289 (PIRP…PTAP).

In terms of biological role, regulator of cell size that promotes cell size increase independently of mTOR and Hippo signaling pathways. Acts by stimulating the translation of specific mRNAs, including those encoding proteins affecting mitochondrial functions. Increases mitochondrial mass and respiration. The polypeptide is Protein Largen (PRR16) (Homo sapiens (Human)).